A 179-amino-acid polypeptide reads, in one-letter code: ATP synthase subunit b, chloroplastic (179 aa).

The helical transmembrane segment at 28-46 (LLNILALVAILVYTGKDFL) threads the bilayer.

Belongs to the ATPase B chain family. In terms of assembly, F-type ATPases have 2 components, F(1) - the catalytic core - and F(0) - the membrane proton channel. F(1) has five subunits: alpha(3), beta(3), gamma(1), delta(1), epsilon(1). F(0) has four main subunits: a(1), b(1), b'(1) and c(10-14). The alpha and beta chains form an alternating ring which encloses part of the gamma chain. F(1) is attached to F(0) by a central stalk formed by the gamma and epsilon chains, while a peripheral stalk is formed by the delta, b and b' chains.

Its subcellular location is the plastid. The protein resides in the chloroplast thylakoid membrane. Its function is as follows. F(1)F(0) ATP synthase produces ATP from ADP in the presence of a proton or sodium gradient. F-type ATPases consist of two structural domains, F(1) containing the extramembraneous catalytic core and F(0) containing the membrane proton channel, linked together by a central stalk and a peripheral stalk. During catalysis, ATP synthesis in the catalytic domain of F(1) is coupled via a rotary mechanism of the central stalk subunits to proton translocation. In terms of biological role, component of the F(0) channel, it forms part of the peripheral stalk, linking F(1) to F(0). In Thalassiosira pseudonana (Marine diatom), this protein is ATP synthase subunit b, chloroplastic.